A 310-amino-acid polypeptide reads, in one-letter code: Acetylglutamate kinase (310 aa).

Substrate contacts are provided by residues 76-77 (GG), arginine 98, and asparagine 203.

The protein belongs to the acetylglutamate kinase family. ArgB subfamily.

It localises to the cytoplasm. The enzyme catalyses N-acetyl-L-glutamate + ATP = N-acetyl-L-glutamyl 5-phosphate + ADP. It functions in the pathway amino-acid biosynthesis; L-arginine biosynthesis; N(2)-acetyl-L-ornithine from L-glutamate: step 2/4. Its function is as follows. Catalyzes the ATP-dependent phosphorylation of N-acetyl-L-glutamate. This chain is Acetylglutamate kinase, found in Cutibacterium acnes (strain DSM 16379 / KPA171202) (Propionibacterium acnes).